Here is a 259-residue protein sequence, read N- to C-terminus: Polycomb group RING finger protein 1 (259 aa).

At Ala2 the chain carries N-acetylalanine. Ser3 bears the Phosphoserine mark. Residue Lys24 forms a Glycyl lysine isopeptide (Lys-Gly) (interchain with G-Cter in SUMO2) linkage. The RING-type zinc-finger motif lies at 47 to 86; the sequence is CCLCAGYFVDATTITECLHTFCKSCIVKYLQTSKYCPMCN. Residues 86–247 form a required for repressor activity region; that stretch reads NIKIHETQPL…LSRWFGKPSP (162 aa). Residue Lys88 forms a Glycyl lysine isopeptide (Lys-Gly) (interchain with G-Cter in SUMO2) linkage. Residues 150–255 are required for the interaction with the KDM2B-SKP1 heterodimeric complex; that stretch reads LPFSSFDHSK…SPLLLQYSVK (106 aa). The interval 167-255 is RING-finger and WD40-associated ubiquitin-like domain (RAWUL); sufficient for interaction with BCOR and BCORL1; sequence EQLNLCLERL…SPLLLQYSVK (89 aa).

In terms of assembly, interacts with BCORL1, forming heterodimers. The PCGF1-BCORL1 heterodimeric complex interacts with the KDM2B-SKP1 heterodimeric complex to form a homotetrameric polycomb repression complex 1 (PRC1.1). Component of the repressive BCOR complex containing a Polycomb group subcomplex at least composed of RYBP, RING1 and RNF2/RING2. Specifically interacts with BCOR, RING1 and RNF2/RING2. Component of a PRC1-like complex. Interacts with CBX6, CBX7 and CBX8. Interacts with DPPA4, NANOG, POU5F1 and RYBP. In terms of tissue distribution, ubiquitous.

The protein resides in the nucleus. Component of the Polycomb group (PcG) multiprotein BCOR complex, a complex required to maintain the transcriptionally repressive state of some genes, such as BCL6 and the cyclin-dependent kinase inhibitor, CDKN1A. Transcriptional repressor that may be targeted to the DNA by BCL6; this transcription repressor activity may be related to PKC signaling pathway. Represses CDKN1A expression by binding to its promoter, and this repression is dependent on the retinoic acid response element (RARE element). Promotes cell cycle progression and enhances cell proliferation as well. May have a positive role in tumor cell growth by down-regulating CDKN1A. Component of a Polycomb group (PcG) multiprotein PRC1-like complex, a complex class required to maintain the transcriptionally repressive state of many genes, including Hox genes, throughout development. PcG PRC1 complex acts via chromatin remodeling and modification of histones; it mediates monoubiquitination of histone H2A 'Lys-119', rendering chromatin heritably changed in its expressibility. Within the PRC1-like complex, regulates RNF2 ubiquitin ligase activity. Regulates the expression of DPPA4 and NANOG in the NT2 embryonic carcinoma cells. The protein is Polycomb group RING finger protein 1 (PCGF1) of Homo sapiens (Human).